The primary structure comprises 457 residues: Chromosomal replication initiator protein DnaA (457 aa).

Residues 1–81 (MERDLSQLWQ…NNTDLVIKVQ (81 aa)) form a domain I, interacts with DnaA modulators region. The domain II stretch occupies residues 81–119 (QEGSKPAARKVVAQQEIANTPVQHSAPMPENEPQAAFRS). The segment at 120–337 (NLNQHHLFEN…GALNRVHANA (218 aa)) is domain III, AAA+ region. ATP is bound by residues Gly165, Gly167, Lys168, and Thr169. Residues 338-457 (DFTGKAITID…WSNLIRTLSA (120 aa)) are domain IV, binds dsDNA.

Belongs to the DnaA family. In terms of assembly, oligomerizes as a right-handed, spiral filament on DNA at oriC.

The protein resides in the cytoplasm. In terms of biological role, plays an essential role in the initiation and regulation of chromosomal replication. ATP-DnaA binds to the origin of replication (oriC) to initiate formation of the DNA replication initiation complex once per cell cycle. Binds the DnaA box (a 9 base pair repeat at the origin) and separates the double-stranded (ds)DNA. Forms a right-handed helical filament on oriC DNA; dsDNA binds to the exterior of the filament while single-stranded (ss)DNA is stabiized in the filament's interior. The ATP-DnaA-oriC complex binds and stabilizes one strand of the AT-rich DNA unwinding element (DUE), permitting loading of DNA polymerase. After initiation quickly degrades to an ADP-DnaA complex that is not apt for DNA replication. Binds acidic phospholipids. The polypeptide is Chromosomal replication initiator protein DnaA (Mannheimia succiniciproducens (strain KCTC 0769BP / MBEL55E)).